The sequence spans 264 residues: Glutamate 5-kinase (264 aa).

Lys-15 contributes to the ATP binding site. Positions 55, 142, and 154 each coordinate substrate. ATP-binding positions include 174 to 175 (SD) and 216 to 222 (TGGIATK).

Belongs to the glutamate 5-kinase family.

The protein resides in the cytoplasm. The catalysed reaction is L-glutamate + ATP = L-glutamyl 5-phosphate + ADP. It participates in amino-acid biosynthesis; L-proline biosynthesis; L-glutamate 5-semialdehyde from L-glutamate: step 1/2. Catalyzes the transfer of a phosphate group to glutamate to form L-glutamate 5-phosphate. This Alkaliphilus metalliredigens (strain QYMF) protein is Glutamate 5-kinase.